Consider the following 602-residue polypeptide: Elongation factor 4 (602 aa).

A tr-type G domain is found at Lys-2–Arg-184. GTP contacts are provided by residues Asp-14–Thr-19 and Asn-131–Asp-134.

This sequence belongs to the TRAFAC class translation factor GTPase superfamily. Classic translation factor GTPase family. LepA subfamily.

The protein localises to the cell inner membrane. The enzyme catalyses GTP + H2O = GDP + phosphate + H(+). Its function is as follows. Required for accurate and efficient protein synthesis under certain stress conditions. May act as a fidelity factor of the translation reaction, by catalyzing a one-codon backward translocation of tRNAs on improperly translocated ribosomes. Back-translocation proceeds from a post-translocation (POST) complex to a pre-translocation (PRE) complex, thus giving elongation factor G a second chance to translocate the tRNAs correctly. Binds to ribosomes in a GTP-dependent manner. The sequence is that of Elongation factor 4 from Verminephrobacter eiseniae (strain EF01-2).